Reading from the N-terminus, the 472-residue chain is tRNA-2-methylthio-N(6)-dimethylallyladenosine synthase (472 aa).

The 121-residue stretch at 22 to 142 (RKVFVKTYGC…LPDALKRARA (121 aa)) folds into the MTTase N-terminal domain. Positions 31, 67, 105, 183, 187, and 190 each coordinate [4Fe-4S] cluster. One can recognise a Radical SAM core domain in the interval 169 to 403 (RARGVTAFLT…LLVKQQRGFA (235 aa)). In terms of domain architecture, TRAM spans 404–466 (EACVGREIDL…PNSLFAEMIG (63 aa)).

It belongs to the methylthiotransferase family. MiaB subfamily. Monomer. [4Fe-4S] cluster is required as a cofactor.

Its subcellular location is the cytoplasm. The enzyme catalyses N(6)-dimethylallyladenosine(37) in tRNA + (sulfur carrier)-SH + AH2 + 2 S-adenosyl-L-methionine = 2-methylsulfanyl-N(6)-dimethylallyladenosine(37) in tRNA + (sulfur carrier)-H + 5'-deoxyadenosine + L-methionine + A + S-adenosyl-L-homocysteine + 2 H(+). Functionally, catalyzes the methylthiolation of N6-(dimethylallyl)adenosine (i(6)A), leading to the formation of 2-methylthio-N6-(dimethylallyl)adenosine (ms(2)i(6)A) at position 37 in tRNAs that read codons beginning with uridine. The sequence is that of tRNA-2-methylthio-N(6)-dimethylallyladenosine synthase from Rhizobium meliloti (strain 1021) (Ensifer meliloti).